Reading from the N-terminus, the 216-residue chain is 3-keto-L-gulonate-6-phosphate decarboxylase UlaD (216 aa).

A substrate-binding site is contributed by Asp-11. Mg(2+)-binding residues include Glu-33 and Asp-62. Residue Arg-192 coordinates substrate.

The protein belongs to the HPS/KGPDC family. KGPDC subfamily. Homodimer. Mg(2+) is required as a cofactor.

It carries out the reaction 3-dehydro-L-gulonate 6-phosphate + H(+) = L-xylulose 5-phosphate + CO2. It functions in the pathway cofactor degradation; L-ascorbate degradation; D-xylulose 5-phosphate from L-ascorbate: step 2/4. Catalyzes the decarboxylation of 3-keto-L-gulonate-6-P into L-xylulose-5-P. Is involved in the anaerobic L-ascorbate utilization. This Escherichia fergusonii (strain ATCC 35469 / DSM 13698 / CCUG 18766 / IAM 14443 / JCM 21226 / LMG 7866 / NBRC 102419 / NCTC 12128 / CDC 0568-73) protein is 3-keto-L-gulonate-6-phosphate decarboxylase UlaD.